Consider the following 547-residue polypeptide: Glucose-6-phosphate isomerase (547 aa).

Glu351 serves as the catalytic Proton donor. Catalysis depends on residues His382 and Lys510.

Belongs to the GPI family.

It is found in the cytoplasm. The enzyme catalyses alpha-D-glucose 6-phosphate = beta-D-fructose 6-phosphate. It functions in the pathway carbohydrate biosynthesis; gluconeogenesis. It participates in carbohydrate degradation; glycolysis; D-glyceraldehyde 3-phosphate and glycerone phosphate from D-glucose: step 2/4. Functionally, catalyzes the reversible isomerization of glucose-6-phosphate to fructose-6-phosphate. The protein is Glucose-6-phosphate isomerase of Saccharophagus degradans (strain 2-40 / ATCC 43961 / DSM 17024).